The chain runs to 723 residues: Homeobox protein HAT3.1 (723 aa).

Positions 1-10 (MYKAVSKRVT) are enriched in basic residues. Disordered stretches follow at residues 1 to 94 (MYKA…GSHR) and 135 to 173 (KRAQRSKEDAGPSSVVANSTPVGRPKKKNKTMNKGQVRE). Residues 11–23 (RSSGSGLKQTNVD) are compositionally biased toward polar residues. Residues 58–83 (LHHEIMDHGKGNEEQKPTPQTVKKDS) are compositionally biased toward basic and acidic residues. The segment at 265–322 (DIFCAKCGSKDLSVDNDIILCDGFCDRGFHQYCLEPPLRKEDIPPDDEGWLCPGCDCK) adopts a PHD-type zinc-finger fold. Disordered stretches follow at residues 357 to 628 (GGQN…KTQR) and 680 to 723 (VEKL…RRRK). Acidic residues predominate over residues 365-407 (LPSDDSDDEEYDPDCLNDNENDEDGSDDNEESENEDGSSDETE). A compositionally biased stretch (basic and acidic residues) spans 417–427 (ESFKEGKDIMK). Residues 435 to 453 (DDSEDDDYDPDAPTCDDDK) show a composition bias toward acidic residues. Basic and acidic residues-rich tracts occupy residues 518-530 (RNVERLDYKKLYD) and 547-556 (DKTARMGKED). Positions 580–589 (KKLIRKSKRA) are enriched in basic residues. Residues 614-673 (SSSSACKQTDPKTQRLYISFQENQYPDKATKESLAKELQMTVKQVNNWFKHRRWSINSKP) constitute a DNA-binding region (homeobox). Residues 680–690 (VEKLKTGKEGE) are compositionally biased toward basic and acidic residues. The span at 695–705 (VAGSSKQTMET) shows a compositional bias: polar residues.

Belongs to the PHD-associated homeobox family. Primarily detected in root tissue.

It is found in the nucleus. Binds only to large DNA fragments. Recognizes a DNA fragment carrying 8 copies of box7 motif of the light-induced cab-E promoter of Nicotiana plumbaginifolia. Also recognizes the box7m1 motif. The protein is Homeobox protein HAT3.1 (HAT3.1) of Arabidopsis thaliana (Mouse-ear cress).